Consider the following 253-residue polypeptide: uncharacterized protein (253 aa).

This is an uncharacterized protein from Bacillus subtilis (strain 168).